Reading from the N-terminus, the 447-residue chain is Probable ethanolamine kinase B (447 aa).

Residues 178-208 (STTISTSTSTSTSTSSTSPSTSPSLENSTLS) are compositionally biased toward low complexity. Residues 178–217 (STTISTSTSTSTSTSSTSPSTSPSLENSTLSPRNMNTQTS) form a disordered region.

This sequence belongs to the choline/ethanolamine kinase family.

The protein resides in the cytoplasm. It catalyses the reaction ethanolamine + ATP = phosphoethanolamine + ADP + H(+). It functions in the pathway phospholipid metabolism; phosphatidylethanolamine biosynthesis; phosphatidylethanolamine from ethanolamine: step 1/3. In terms of biological role, highly specific for ethanolamine phosphorylation. May be a rate-controlling step in phosphatidylethanolamine biosynthesis. The chain is Probable ethanolamine kinase B (etnkB) from Dictyostelium discoideum (Social amoeba).